Reading from the N-terminus, the 552-residue chain is Chaperonin GroEL 3 (552 aa).

Residues 30-33 (TLGP), lysine 51, 87-91 (DGTTT), glycine 415, and aspartate 495 each bind ATP.

This sequence belongs to the chaperonin (HSP60) family. In terms of assembly, forms a cylinder of 14 subunits composed of two heptameric rings stacked back-to-back. Interacts with the co-chaperonin GroES.

It localises to the cytoplasm. It catalyses the reaction ATP + H2O + a folded polypeptide = ADP + phosphate + an unfolded polypeptide.. Together with its co-chaperonin GroES, plays an essential role in assisting protein folding. The GroEL-GroES system forms a nano-cage that allows encapsulation of the non-native substrate proteins and provides a physical environment optimized to promote and accelerate protein folding. The protein is Chaperonin GroEL 3 of Mesorhizobium japonicum (strain LMG 29417 / CECT 9101 / MAFF 303099) (Mesorhizobium loti (strain MAFF 303099)).